The sequence spans 214 residues: Phosphoenolpyruvate guanylyltransferase (214 aa).

Phosphoenolpyruvate is bound by residues Thr148, Gly163, and Ser166.

This sequence belongs to the CofC family.

It catalyses the reaction phosphoenolpyruvate + GTP + H(+) = enolpyruvoyl-2-diphospho-5'-guanosine + diphosphate. It functions in the pathway cofactor biosynthesis; coenzyme F420 biosynthesis. In terms of biological role, guanylyltransferase that catalyzes the activation of phosphoenolpyruvate (PEP) as enolpyruvoyl-2-diphospho-5'-guanosine, via the condensation of PEP with GTP. It is involved in the biosynthesis of coenzyme F420, a hydride carrier cofactor. This chain is Phosphoenolpyruvate guanylyltransferase, found in Mycobacterium tuberculosis (strain KZN 1435 / MDR).